The following is a 399-amino-acid chain: UDP-N-acetylglucosamine--N-acetylmuramyl-(pentapeptide) pyrophosphoryl-undecaprenol N-acetylglucosamine transferase (399 aa).

UDP-N-acetyl-alpha-D-glucosamine is bound by residues 29–31, N148, R185, S219, and Q318; that span reads TAG.

Belongs to the glycosyltransferase 28 family. MurG subfamily.

It localises to the cell membrane. It carries out the reaction di-trans,octa-cis-undecaprenyl diphospho-N-acetyl-alpha-D-muramoyl-L-alanyl-D-glutamyl-meso-2,6-diaminopimeloyl-D-alanyl-D-alanine + UDP-N-acetyl-alpha-D-glucosamine = di-trans,octa-cis-undecaprenyl diphospho-[N-acetyl-alpha-D-glucosaminyl-(1-&gt;4)]-N-acetyl-alpha-D-muramoyl-L-alanyl-D-glutamyl-meso-2,6-diaminopimeloyl-D-alanyl-D-alanine + UDP + H(+). It functions in the pathway cell wall biogenesis; peptidoglycan biosynthesis. Cell wall formation. Catalyzes the transfer of a GlcNAc subunit on undecaprenyl-pyrophosphoryl-MurNAc-pentapeptide (lipid intermediate I) to form undecaprenyl-pyrophosphoryl-MurNAc-(pentapeptide)GlcNAc (lipid intermediate II). The protein is UDP-N-acetylglucosamine--N-acetylmuramyl-(pentapeptide) pyrophosphoryl-undecaprenol N-acetylglucosamine transferase of Mycobacterium ulcerans (strain Agy99).